A 172-amino-acid chain; its full sequence is Small ribosomal subunit protein uS5 (172 aa).

The S5 DRBM domain maps to Leu16–Val79.

Belongs to the universal ribosomal protein uS5 family. Part of the 30S ribosomal subunit. Contacts proteins S4 and S8.

Its function is as follows. With S4 and S12 plays an important role in translational accuracy. Located at the back of the 30S subunit body where it stabilizes the conformation of the head with respect to the body. The sequence is that of Small ribosomal subunit protein uS5 from Pelodictyon phaeoclathratiforme (strain DSM 5477 / BU-1).